A 155-amino-acid chain; its full sequence is Small ribosomal subunit protein uS7c (155 aa).

Belongs to the universal ribosomal protein uS7 family. As to quaternary structure, part of the 30S ribosomal subunit.

Its subcellular location is the plastid. It localises to the chloroplast. Functionally, one of the primary rRNA binding proteins, it binds directly to 16S rRNA where it nucleates assembly of the head domain of the 30S subunit. The polypeptide is Small ribosomal subunit protein uS7c (rps7) (Cryptomeria japonica (Japanese cedar)).